The primary structure comprises 396 residues: E3 ubiquitin-protein transferase MAEA (396 aa).

Residues 1–124 form an extracellular and involved in cell to cell contact region; it reads MAVQESAAQL…AAASMWKRKR (124 aa). Phosphothreonine is present on Thr28. The LisH domain occupies 121-153; the sequence is KRKRMDRMMVEHLLRCGYYNTAVKLARQSGIED. Residues 159-216 enclose the CTLH domain; it reads MFLTAKEVEESLERRETATCLAWCHDNKSRLRKMKSCLEFSLRIQEFIELVRQNKRLD. An RING-Gid-type zinc finger spans residues 314-381; the sequence is CPVCSRSLNK…QDDKVVCPRT (68 aa).

As to quaternary structure, identified in the CTLH complex that contains GID4, RANBP9 and/or RANBP10, MKLN1, MAEA, RMND5A (or alternatively its paralog RMND5B), GID8, ARMC8, WDR26 and YPEL5. Within this complex, MAEA, RMND5A (or alternatively its paralog RMND5B), GID8, WDR26, and RANBP9 and/or RANBP10 form the catalytic core, while GID4, MKLN1, ARMC8 and YPEL5 have ancillary roles. Interacts with F-actin. Autoubiquitinated as component of the CTLH E3 ubiquitin-protein ligase complex (in vitro). Detected in embryonic fibroblasts. Detected in macrophages. Detected in heart. liver, spleen and kidney (at protein level).

It is found in the cytoplasm. The protein localises to the nucleus. Its subcellular location is the nucleoplasm. The protein resides in the nucleus matrix. It localises to the cell membrane. It is found in the cytoskeleton. The catalysed reaction is S-ubiquitinyl-[E2 ubiquitin-conjugating enzyme]-L-cysteine + [acceptor protein]-L-lysine = [E2 ubiquitin-conjugating enzyme]-L-cysteine + N(6)-ubiquitinyl-[acceptor protein]-L-lysine.. Core component of the CTLH E3 ubiquitin-protein ligase complex that selectively accepts ubiquitin from UBE2H and mediates ubiquitination and subsequent proteasomal degradation of the transcription factor HBP1. MAEA and RMND5A are both required for catalytic activity of the CTLH E3 ubiquitin-protein ligase complex. MAEA is required for normal cell proliferation. The CTLH E3 ubiquitin-protein ligase complex is not required for the degradation of enzymes involved in gluconeogenesis, such as FBP1. Plays a role in erythroblast enucleation during erythrocyte maturation and in the development of mature macrophages. Mediates the attachment of erythroid cell to mature macrophages; this MAEA-mediated contact inhibits erythroid cell apoptosis. Participates in erythroblastic island formation, which is the functional unit of definitive erythropoiesis. Associates with F-actin to regulate actin distribution in erythroblasts and macrophages. May contribute to nuclear architecture and cells division events. The chain is E3 ubiquitin-protein transferase MAEA (Maea) from Mus musculus (Mouse).